Here is a 72-residue protein sequence, read N- to C-terminus: Putative sodium channel toxin Ts18 (72 aa).

The signal sequence occupies residues 1–21 (MNFRFPFLLMITISLIGAVLT). Intrachain disulfides connect cysteine 38–cysteine 61, cysteine 47–cysteine 66, and cysteine 51–cysteine 68.

This sequence belongs to the long (3 C-C) scorpion toxin superfamily. As to expression, expressed by the venom gland.

It localises to the secreted. Its function is as follows. Binds to sodium channels (Nav) and affects the channel activation process. In Tityus serrulatus (Brazilian scorpion), this protein is Putative sodium channel toxin Ts18.